A 980-amino-acid chain; its full sequence is Putative helicase 087L (980 aa).

The Helicase ATP-binding domain maps to 59–246; that stretch reads INPHTLYDGV…IDLFNLILRT (188 aa). 72–79 is an ATP binding site; the sequence is HEMGTGKT. The DEAH box signature appears at 189 to 192; it reads DEAH. In terms of domain architecture, Helicase C-terminal spans 389 to 546; that stretch reads RLSFVFSEFV…SIDLHMYEIA (158 aa).

It belongs to the IIV-6 022L family. SNF2/RAD54 helicase subfamily.

This Invertebrate iridescent virus 3 (IIV-3) protein is Putative helicase 087L.